Reading from the N-terminus, the 746-residue chain is Steroid receptor seven-up, isoform A (746 aa).

The tract at residues 38-191 (PPHSAWHEPP…HSQSSNSGSQ (154 aa)) is disordered. Residues 56 to 68 (AASAGPGTTTGSV) are compositionally biased toward low complexity. The span at 83-101 (QQSAVIKQDLSCPSLNQAG) shows a compositional bias: polar residues. A compositionally biased stretch (gly residues) spans 122–141 (GSAGGHHSGSGSGSGSGVNP). The segment covering 158–170 (MLTSIKGQPTGCG) has biased composition (polar residues). The span at 171–191 (STTPSSQANSSHSQSSNSGSQ) shows a compositional bias: low complexity. Positions 197-272 (NIECVVCGDK…MGMRREAVQR (76 aa)) form a DNA-binding region, nuclear receptor. NR C4-type zinc fingers lie at residues 200-220 (CVVCGDKSSGKHYGQFTCEGC) and 236-260 (CRGSRNCPIDQHHRNQCQYCRLKKC). The NR LBD domain maps to 307 to 556 (YLSSYISLLL…PLVPSAGSAF (250 aa)). Residues 579–645 (QATPPSSGGG…APAPVPTSSV (67 aa)) are disordered. Polar residues predominate over residues 592–605 (GHNNSSGLGASLPT). Over residues 606–645 (QSQSGSSSRNLTASPLSTSLATAPAPASASAPAPVPTSSV) the composition is skewed to low complexity.

The protein belongs to the nuclear hormone receptor family. NR2 subfamily. In terms of tissue distribution, expressed in several embryonic tissues; dorsal vessel, oenocyte and fat body. CNS expression is dynamic and confined to temporally restricted subsections of the NB lineage; expressed in many NB and GMCs, but only a small number of neurons.

Its subcellular location is the nucleus. Receptor that is required in photoreceptors R1, R3, R4 and R6 during eye development; generation of the ganglion mother cell-2 (GMC-2) fate in the nb7-3 lineage, coinciding with the transition in the expression of HB to KR in the neuroblasts (NBs). This Drosophila melanogaster (Fruit fly) protein is Steroid receptor seven-up, isoform A (svp).